The following is a 31-amino-acid chain: Photosystem II reaction center protein T (31 aa).

A helical transmembrane segment spans residues 3–23; sequence SVAYILILTMALAVLFFAIAF.

The protein belongs to the PsbT family. As to quaternary structure, PSII is composed of 1 copy each of membrane proteins PsbA, PsbB, PsbC, PsbD, PsbE, PsbF, PsbH, PsbI, PsbJ, PsbK, PsbL, PsbM, PsbT, PsbX, PsbY, PsbZ, Psb30/Ycf12, peripheral proteins PsbO, CyanoQ (PsbQ), PsbU, PsbV and a large number of cofactors. It forms dimeric complexes.

Its subcellular location is the cellular thylakoid membrane. In terms of biological role, found at the monomer-monomer interface of the photosystem II (PS II) dimer, plays a role in assembly and dimerization of PSII. PSII is a light-driven water plastoquinone oxidoreductase, using light energy to abstract electrons from H(2)O, generating a proton gradient subsequently used for ATP formation. This Gloeothece citriformis (strain PCC 7424) (Cyanothece sp. (strain PCC 7424)) protein is Photosystem II reaction center protein T.